Here is a 310-residue protein sequence, read N- to C-terminus: Upstream stimulatory factor 1 (310 aa).

Positions 1-17 are enriched in polar residues; sequence MKGQQKTAETEEGTVQI. Disordered stretches follow at residues 1-26 and 171-209; these read MKGQ…ATGE and QGGS…EVER. Over residues 190–209 the composition is skewed to basic and acidic residues; sequence EAPRTTRDEKRRAQHNEVER. The 56-residue stretch at 199-254 folds into the bHLH domain; the sequence is KRRAQHNEVERRRRDKINNWIVQLSKIIPDCSMESTKSGQSKGGILSKACDYIQEL. A leucine-zipper region spans residues 271 to 292; sequence LQLDNDVLRQQVEDLKNKNLLL. Lys306 is covalently cross-linked (Glycyl lysine isopeptide (Lys-Gly) (interchain with G-Cter in SUMO2)).

In terms of assembly, efficient DNA binding requires dimerization with another bHLH protein. Binds DNA as a homodimer or a heterodimer (USF1/USF2).

The protein resides in the nucleus. Functionally, transcription factor that binds to a symmetrical DNA sequence (E-boxes) (5'-CACGTG-3') that is found in a variety of viral and cellular promoters. In Bos taurus (Bovine), this protein is Upstream stimulatory factor 1 (USF1).